We begin with the raw amino-acid sequence, 285 residues long: NAD kinase (285 aa).

The active-site Proton acceptor is Asp68. NAD(+)-binding positions include 68-69 (DG), 142-143 (ND), Arg153, Lys170, Asp172, 183-188 (TAYNLS), and Gln242.

This sequence belongs to the NAD kinase family. It depends on a divalent metal cation as a cofactor.

Its subcellular location is the cytoplasm. The catalysed reaction is NAD(+) + ATP = ADP + NADP(+) + H(+). Involved in the regulation of the intracellular balance of NAD and NADP, and is a key enzyme in the biosynthesis of NADP. Catalyzes specifically the phosphorylation on 2'-hydroxyl of the adenosine moiety of NAD to yield NADP. In Syntrophotalea carbinolica (strain DSM 2380 / NBRC 103641 / GraBd1) (Pelobacter carbinolicus), this protein is NAD kinase.